A 79-amino-acid chain; its full sequence is Small ribosomal subunit protein bS18 (79 aa).

It belongs to the bacterial ribosomal protein bS18 family. Part of the 30S ribosomal subunit. Forms a tight heterodimer with protein bS6.

Functionally, binds as a heterodimer with protein bS6 to the central domain of the 16S rRNA, where it helps stabilize the platform of the 30S subunit. This chain is Small ribosomal subunit protein bS18, found in Streptococcus pneumoniae serotype 19F (strain G54).